A 106-amino-acid chain; its full sequence is Integration host factor subunit beta (106 aa).

A disordered region spans residues proline 57–alanine 106. The segment covering threonine 82–leucine 95 has biased composition (basic and acidic residues).

It belongs to the bacterial histone-like protein family. As to quaternary structure, heterodimer of an alpha and a beta chain.

Functionally, this protein is one of the two subunits of integration host factor, a specific DNA-binding protein that functions in genetic recombination as well as in transcriptional and translational control. The polypeptide is Integration host factor subunit beta (Afipia carboxidovorans (strain ATCC 49405 / DSM 1227 / KCTC 32145 / OM5) (Oligotropha carboxidovorans)).